A 442-amino-acid polypeptide reads, in one-letter code: MPRARRKFYIHTFGCQMNQADSGIITALLEKEGYQQAASEEEAGIIMLNTCAVRENAVERISHYLQHVKGFKRKCPELIVGLTGCIPQYRREELFTVFPVIDFLAGPDTYRVLPALIAEAGDSRSARLEFNAFETYDGVRQARTQSLNAFVPIIRGCNNMCAFCVVPFTRGRERSHPFESVLDEVRALADDGCREITLLGQNVNSYHDPASGADFSRLLDAVSREAPETRIRFTTSHPKDMSHSLVETMALRPNICNHLHLPVQSGSTRMLARMNRGHDIEEYRNKIELLRKWIPGISLSTDLIAGFCGESEADHDQTLELMREVRFDSVFMFYYSVRQGTLAARTMPDDVPEEVKKQRLQEIIDLQNGISAELLGLAPGSVVEVLVESESRRSSDQLMGRTDGNRVVVFDRGIHQPGDLVRVMITGSTSATLFGQSAENLQ.

The 117-residue stretch at 6-122 (RKFYIHTFGC…LPALIAEAGD (117 aa)) folds into the MTTase N-terminal domain. Positions 15, 51, 85, 157, 161, and 164 each coordinate [4Fe-4S] cluster. The region spanning 143-373 (RTQSLNAFVP…IDLQNGISAE (231 aa)) is the Radical SAM core domain. The TRAM domain occupies 376–439 (GLAPGSVVEV…SATLFGQSAE (64 aa)).

This sequence belongs to the methylthiotransferase family. MiaB subfamily. As to quaternary structure, monomer. [4Fe-4S] cluster is required as a cofactor.

The protein resides in the cytoplasm. The enzyme catalyses N(6)-dimethylallyladenosine(37) in tRNA + (sulfur carrier)-SH + AH2 + 2 S-adenosyl-L-methionine = 2-methylsulfanyl-N(6)-dimethylallyladenosine(37) in tRNA + (sulfur carrier)-H + 5'-deoxyadenosine + L-methionine + A + S-adenosyl-L-homocysteine + 2 H(+). Its function is as follows. Catalyzes the methylthiolation of N6-(dimethylallyl)adenosine (i(6)A), leading to the formation of 2-methylthio-N6-(dimethylallyl)adenosine (ms(2)i(6)A) at position 37 in tRNAs that read codons beginning with uridine. The chain is tRNA-2-methylthio-N(6)-dimethylallyladenosine synthase from Chlorobium phaeobacteroides (strain DSM 266 / SMG 266 / 2430).